Here is a 101-residue protein sequence, read N- to C-terminus: Integration host factor subunit beta (101 aa).

The tract at residues 58–101 (ARAGRNPRTGAHVPVDQKSVPFFKTGKEMRERLNRDTGAPDSGA) is disordered. A compositionally biased stretch (basic and acidic residues) spans 82–92 (TGKEMRERLNR).

The protein belongs to the bacterial histone-like protein family. As to quaternary structure, heterodimer of an alpha and a beta chain.

In terms of biological role, this protein is one of the two subunits of integration host factor, a specific DNA-binding protein that functions in genetic recombination as well as in transcriptional and translational control. The sequence is that of Integration host factor subunit beta from Rhodopseudomonas palustris (strain BisB18).